Reading from the N-terminus, the 236-residue chain is ATP synthase subunit 4, mitochondrial (236 aa).

A mitochondrion-targeting transit peptide spans 1–29; the sequence is MAFRALTTKAAARPLLALGPRSVAMGARY.

The protein belongs to the eukaryotic ATPase subunit B family. In terms of assembly, F-type ATPases have 2 components, CF(1) - the catalytic core - and CF(0) - the membrane proton channel. In yeast, the dimeric form of ATP synthase consists of 17 polypeptides: alpha, beta, gamma, delta, epsilon, 4 (B), 5 (OSCP), 6 (A), 8, 9 (C), d, E (Tim11), f, g, h, i/j and k.

The protein localises to the mitochondrion. The protein resides in the mitochondrion inner membrane. In terms of biological role, mitochondrial membrane ATP synthase (F(1)F(0) ATP synthase or Complex V) produces ATP from ADP in the presence of a proton gradient across the membrane which is generated by electron transport complexes of the respiratory chain. F-type ATPases consist of two structural domains, F(1) - containing the extramembraneous catalytic core, and F(0) - containing the membrane proton channel, linked together by a central stalk and a peripheral stalk. During catalysis, ATP synthesis in the catalytic domain of F(1) is coupled via a rotary mechanism of the central stalk subunits to proton translocation. Part of the complex F(0) domain and the peripheric stalk, which acts as a stator to hold the catalytic alpha(3)beta(3) subcomplex and subunit a/ATP6 static relative to the rotary elements. This is ATP synthase subunit 4, mitochondrial (ATP4) from Eremothecium gossypii (strain ATCC 10895 / CBS 109.51 / FGSC 9923 / NRRL Y-1056) (Yeast).